The sequence spans 381 residues: Opsin-1 (381 aa).

Residues 1–53 are Extracellular-facing; it reads MASASLISEPSFSAYWGGSGGFANQTVVDKVPPEMLYLVDPHWYQFPPMNPLW. The N-linked (GlcNAc...) asparagine glycan is linked to Asn-24. Residues 54 to 78 traverse the membrane as a helical segment; the sequence is HGLLGFVIGVLGVISVIGNGMVIYI. Residues 79–90 lie on the Cytoplasmic side of the membrane; sequence FSTTKSLRTPSN. A helical transmembrane segment spans residues 91-115; sequence LLVVNLAFSDFLMMFTMSAPMGINC. Residues 116 to 130 lie on the Extracellular side of the membrane; it reads YYETWVLGPFMCELY. A disulfide bond links Cys-127 and Cys-204. The helical transmembrane segment at 131–150 threads the bilayer; sequence ALFGSLFGCGSIWTMTMIAL. Over 151–169 the chain is Cytoplasmic; that stretch reads DRYNVIVKGLSAKPMTNKT. The helical transmembrane segment at 170–193 threads the bilayer; sequence AMLRILFIWAFSVAWTIMPLFGWN. The Extracellular segment spans residues 194–217; it reads RYVPEGNMTACGTDYLTKDWVSRS. An N-linked (GlcNAc...) asparagine glycan is attached at Asn-200. A helical membrane pass occupies residues 218-245; that stretch reads YILVYSFFVYLLPLGTIIYSYFFILQAV. The Cytoplasmic segment spans residues 246-280; it reads SAHEKQMREQRKKMNVASLRSAEASQTSAECKLAK. Residues 281–304 traverse the membrane as a helical segment; it reads VALMTISLWFFGWTPYLIINFTGI. The Extracellular segment spans residues 305-311; it reads FETMKIS. The helical transmembrane segment at 312–336 threads the bilayer; sequence PLLTIWGSLFAKANAVFNPIVYGIS. Position 323 is an N6-(retinylidene)lysine (Lys-323). The Cytoplasmic segment spans residues 337-381; it reads HPKYRAALEKKFPSLACASSSDDNTSVASGATTVSDEKSEKSASA. Polar residues predominate over residues 354 to 370; sequence ASSSDDNTSVASGATTV. Positions 354–381 are disordered; it reads ASSSDDNTSVASGATTVSDEKSEKSASA. Over residues 371 to 381 the composition is skewed to basic and acidic residues; sequence SDEKSEKSASA.

Belongs to the G-protein coupled receptor 1 family. Opsin subfamily. In terms of processing, phosphorylated on some or all of the serine and threonine residues present in the C-terminal region.

The protein resides in the cell projection. It localises to the rhabdomere membrane. In terms of biological role, visual pigments are the light-absorbing molecules that mediate vision. They consist of an apoprotein, opsin, covalently linked to cis-retinal. In Schistocerca gregaria (Desert locust), this protein is Opsin-1 (Lo1).